Reading from the N-terminus, the 598-residue chain is Elongation factor 4 (598 aa).

The tr-type G domain maps to 4-186 (SHIRNFSIIA…VIVNKIPPPE (183 aa)). GTP-binding positions include 16 to 21 (DHGKST) and 133 to 136 (NKID).

Belongs to the TRAFAC class translation factor GTPase superfamily. Classic translation factor GTPase family. LepA subfamily.

It localises to the cell inner membrane. The enzyme catalyses GTP + H2O = GDP + phosphate + H(+). Functionally, required for accurate and efficient protein synthesis under certain stress conditions. May act as a fidelity factor of the translation reaction, by catalyzing a one-codon backward translocation of tRNAs on improperly translocated ribosomes. Back-translocation proceeds from a post-translocation (POST) complex to a pre-translocation (PRE) complex, thus giving elongation factor G a second chance to translocate the tRNAs correctly. Binds to ribosomes in a GTP-dependent manner. This chain is Elongation factor 4, found in Alteromonas mediterranea (strain DSM 17117 / CIP 110805 / LMG 28347 / Deep ecotype).